The primary structure comprises 281 residues: Diaminopimelate epimerase (281 aa).

Positions 13 and 66 each coordinate substrate. The active-site Proton donor is the Cys-75. Residues 76-77 (GN), Asn-164, Asn-197, and 215-216 (ER) each bind substrate. The active-site Proton acceptor is the Cys-224. 225 to 226 (GT) is a binding site for substrate.

This sequence belongs to the diaminopimelate epimerase family. As to quaternary structure, homodimer.

It is found in the cytoplasm. It catalyses the reaction (2S,6S)-2,6-diaminopimelate = meso-2,6-diaminopimelate. Its pathway is amino-acid biosynthesis; L-lysine biosynthesis via DAP pathway; DL-2,6-diaminopimelate from LL-2,6-diaminopimelate: step 1/1. Functionally, catalyzes the stereoinversion of LL-2,6-diaminopimelate (L,L-DAP) to meso-diaminopimelate (meso-DAP), a precursor of L-lysine and an essential component of the bacterial peptidoglycan. The protein is Diaminopimelate epimerase of Picosynechococcus sp. (strain ATCC 27264 / PCC 7002 / PR-6) (Agmenellum quadruplicatum).